The chain runs to 371 residues: Serpentine receptor class delta-1 (371 aa).

Helical transmembrane passes span 31 to 51 (LSEV…YVIF), 62 to 82 (AVLL…SLLA), 109 to 129 (CFFC…ILLI), 148 to 168 (MIVI…FYFW), 209 to 229 (IPSL…YFII), 267 to 287 (AIPI…FGII), and 295 to 315 (ITFR…FIFI). The tract at residues 344 to 371 (EKFNQPPKQPTNPAQQSANNDAAKTEKV) is disordered. The span at 354–365 (TNPAQQSANNDA) shows a compositional bias: polar residues.

This sequence belongs to the nematode receptor-like protein srd family.

It is found in the membrane. The chain is Serpentine receptor class delta-1 (srd-1) from Caenorhabditis elegans.